Consider the following 394-residue polypeptide: uncharacterized protein (394 aa).

Transmembrane regions (helical) follow at residues 22 to 42 (VLVS…VLLH), 60 to 80 (LALF…LLLF), 81 to 101 (GFTG…APVA), 231 to 251 (LHLA…YLWL), 271 to 291 (GFCA…QLAP), 303 to 323 (LFLV…GDWP), 328 to 348 (LLGV…APWL), and 355 to 375 (ALGP…HAWM).

The protein localises to the cell membrane. This is an uncharacterized protein from Pseudomonas aeruginosa (strain ATCC 15692 / DSM 22644 / CIP 104116 / JCM 14847 / LMG 12228 / 1C / PRS 101 / PAO1).